Here is a 132-residue protein sequence, read N- to C-terminus: Small ribosomal subunit protein uS8 (132 aa).

The protein belongs to the universal ribosomal protein uS8 family. In terms of assembly, part of the 30S ribosomal subunit. Contacts proteins S5 and S12.

In terms of biological role, one of the primary rRNA binding proteins, it binds directly to 16S rRNA central domain where it helps coordinate assembly of the platform of the 30S subunit. The polypeptide is Small ribosomal subunit protein uS8 (Natranaerobius thermophilus (strain ATCC BAA-1301 / DSM 18059 / JW/NM-WN-LF)).